The primary structure comprises 62 residues: UPF0291 protein CLM_2971 (62 aa).

Belongs to the UPF0291 family.

The protein resides in the cytoplasm. This Clostridium botulinum (strain Kyoto / Type A2) protein is UPF0291 protein CLM_2971.